Consider the following 548-residue polypeptide: Druantia protein DruB (548 aa).

The protein resides in the cytoplasm. Its function is as follows. Component of antiviral defense system Druantia type I, composed of DruA, DruB, DruC, DruD and DruE. Expression of Druantia in E.coli (strain MG1655) confers resistance to phage lambda, SECphi18, SECphi27 and T4. The sequence is that of Druantia protein DruB from Escherichia coli (strain UMEA 4076-1).